We begin with the raw amino-acid sequence, 378 residues long: Erythronate-4-phosphate dehydrogenase (378 aa).

2 residues coordinate substrate: Ser-45 and Thr-66. NAD(+)-binding residues include Asp-146 and Thr-175. Arg-208 is an active-site residue. Asp-232 lines the NAD(+) pocket. Glu-237 is a catalytic residue. The active-site Proton donor is the His-254. Gly-257 provides a ligand contact to NAD(+). Tyr-258 contacts substrate.

It belongs to the D-isomer specific 2-hydroxyacid dehydrogenase family. PdxB subfamily. As to quaternary structure, homodimer.

Its subcellular location is the cytoplasm. The enzyme catalyses 4-phospho-D-erythronate + NAD(+) = (R)-3-hydroxy-2-oxo-4-phosphooxybutanoate + NADH + H(+). The protein operates within cofactor biosynthesis; pyridoxine 5'-phosphate biosynthesis; pyridoxine 5'-phosphate from D-erythrose 4-phosphate: step 2/5. Functionally, catalyzes the oxidation of erythronate-4-phosphate to 3-hydroxy-2-oxo-4-phosphonooxybutanoate. This is Erythronate-4-phosphate dehydrogenase from Escherichia coli (strain ATCC 8739 / DSM 1576 / NBRC 3972 / NCIMB 8545 / WDCM 00012 / Crooks).